A 115-amino-acid chain; its full sequence is UPF0738 protein SAB0871 (115 aa).

This sequence belongs to the UPF0738 family.

This is UPF0738 protein SAB0871 from Staphylococcus aureus (strain bovine RF122 / ET3-1).